A 534-amino-acid polypeptide reads, in one-letter code: Peptide chain release factor 3 (534 aa).

The region spanning 9–278 (ARRRTFAIIS…FFIEHAPPPQ (270 aa)) is the tr-type G domain. Residues 18–25 (SHPDAGKT), 86–90 (DTPGH), and 140–143 (NKLD) each bind GTP.

Belongs to the TRAFAC class translation factor GTPase superfamily. Classic translation factor GTPase family. PrfC subfamily.

The protein localises to the cytoplasm. Functionally, increases the formation of ribosomal termination complexes and stimulates activities of RF-1 and RF-2. It binds guanine nucleotides and has strong preference for UGA stop codons. It may interact directly with the ribosome. The stimulation of RF-1 and RF-2 is significantly reduced by GTP and GDP, but not by GMP. The sequence is that of Peptide chain release factor 3 from Xanthomonas oryzae pv. oryzae (strain MAFF 311018).